An 811-amino-acid polypeptide reads, in one-letter code: MVIFKERKPTENLFTRKIPAKYFIFSPSFLSVHYFEFYLPMSGDNNIEPTSRGSNDNSNGPSNGSSVNSNRYSLNAPKYSSQPPPASHTYLPPMSVNIPPIASKSSSIYSLLHQSSPRPETPNPILPPLIGSGPGSHKPSPTPTQPPAQPATQRQPATYSVYPASISLNRSNSSAYPLSFKSEETLNNNPPTAAKRTNTFPSIPSSTKKQKTSQEKRISSISRRNTQEIIAKQIAENNKSKTIEEYAQIVKHAEIKVLSMDSQNTSKAALQLAEQNRERERQVFALLWLMKNCKSQHDSYVPRGKIFAQYASSCSQNNLKPLSQASLGKLIRTVFPDLTTRRLGMRGQSKYHYCGLKLTVNESGSVSLNNNNASLSLVHNNDPISPLSSPSPSSPSPQVPNVSSPFSLNRKSLSRTGSPVKQSSNDNPNEPELESQHPNETEANKLDSLPPAANNPTGTLSSDELTFTHDLIEKVFNCNDKLSDNYNTQILSNTEHPLLTSYKLDFPKIPAGVLPTDTDSDVISSLESLYHIHCNSVYECIKFLKSDNISNALFFSNSNSISPTMFNLFISEPLIDWVTKCDLITYTGLIKFFSQFIIHSNEISDSIIQKLESMIKLLPEQINKAVLELPKALVQRKLSIINNFTKLVKKLIKLLKFILNFLKSFPIFKSGMNNDWKNIVNLDDILEMMINEDDTNSETNTIMQHLQGFCQVFVTKFLNSSMSVSNDPSVSIECKSLNEMIKDFCSFISLQSKFSCLKLIDCSTRFRNAIIGDISLKSNENLLSWLFLNNVMGQLLNYCFEVMKFVNGLKV.

Disordered regions lie at residues 48-92 and 111-156; these read EPTS…TYLP and LLHQ…QRQP. A compositionally biased stretch (low complexity) spans 51-70; the sequence is SRGSNDNSNGPSNGSSVNSN. Positions 140–149 are enriched in pro residues; the sequence is SPTPTQPPAQ. Phosphoserine is present on Ser173. A disordered region spans residues 181 to 222; the sequence is KSEETLNNNPPTAAKRTNTFPSIPSSTKKQKTSQEKRISSIS. Residues 185–204 show a composition bias toward polar residues; sequence TLNNNPPTAAKRTNTFPSIP. The RFX-type winged-helix DNA-binding region spans 285–360; it reads ALLWLMKNCK…YHYCGLKLTV (76 aa). Low complexity predominate over residues 377 to 391; sequence LVHNNDPISPLSSPS. The tract at residues 377–461 is disordered; sequence LVHNNDPISP…AANNPTGTLS (85 aa). Residues 409 to 428 are compositionally biased toward polar residues; sequence NRKSLSRTGSPVKQSSNDNP. A compositionally biased stretch (basic and acidic residues) spans 434 to 445; the sequence is ESQHPNETEANK.

This sequence belongs to the RFX family.

This chain is RFX-like DNA-binding protein RFX1 (RFX1), found in Saccharomyces cerevisiae (strain ATCC 204508 / S288c) (Baker's yeast).